A 413-amino-acid chain; its full sequence is ORC1-type DNA replication protein 10 (413 aa).

ATP-binding positions include 63–67 (VGKTA), Y211, and R223.

The protein belongs to the CDC6/cdc18 family.

Involved in regulation of DNA replication. The chain is ORC1-type DNA replication protein 10 (orc10) from Halobacterium salinarum (strain ATCC 700922 / JCM 11081 / NRC-1) (Halobacterium halobium).